The following is a 181-amino-acid chain: uncharacterized protein (181 aa).

The disordered stretch occupies residues 25–47 (ELANEVSAGDEEPYDDDIWESED). The span at 32–47 (AGDEEPYDDDIWESED) shows a compositional bias: acidic residues. The helical transmembrane segment at 149 to 169 (ILTLILLSCGLLMLFIGYPIL) threads the bilayer.

Its subcellular location is the cytoplasm. The protein resides in the membrane. This is an uncharacterized protein from Schizosaccharomyces pombe (strain 972 / ATCC 24843) (Fission yeast).